Consider the following 237-residue polypeptide: Ribonuclease PH (237 aa).

Residues Arg86 and 124–126 (GTR) each bind phosphate.

This sequence belongs to the RNase PH family. In terms of assembly, homohexameric ring arranged as a trimer of dimers.

It catalyses the reaction tRNA(n+1) + phosphate = tRNA(n) + a ribonucleoside 5'-diphosphate. In terms of biological role, phosphorolytic 3'-5' exoribonuclease that plays an important role in tRNA 3'-end maturation. Removes nucleotide residues following the 3'-CCA terminus of tRNAs; can also add nucleotides to the ends of RNA molecules by using nucleoside diphosphates as substrates, but this may not be physiologically important. Probably plays a role in initiation of 16S rRNA degradation (leading to ribosome degradation) during starvation. This is Ribonuclease PH from Shewanella oneidensis (strain ATCC 700550 / JCM 31522 / CIP 106686 / LMG 19005 / NCIMB 14063 / MR-1).